Consider the following 85-residue polypeptide: Large ribosomal subunit protein bL27 (85 aa).

Residues 1-20 form a disordered region; that stretch reads MAHKKAGGSSRNGRDSEAKR.

It belongs to the bacterial ribosomal protein bL27 family.

This chain is Large ribosomal subunit protein bL27, found in Aeromonas salmonicida (strain A449).